Consider the following 310-residue polypeptide: Ribonuclease Z (310 aa).

Zn(2+) is bound by residues His61, His63, Asp65, His66, and His139. Asp65 acts as the Proton acceptor in catalysis. The segment at 150–175 (EDDRPGRFDRPKAEELGVPVGPKFGR) is disordered. Residues 153 to 164 (RPGRFDRPKAEE) show a composition bias toward basic and acidic residues. The Zn(2+) site is built by Asp210 and His268.

The protein belongs to the RNase Z family. As to quaternary structure, homodimer. Zn(2+) serves as cofactor.

The catalysed reaction is Endonucleolytic cleavage of RNA, removing extra 3' nucleotides from tRNA precursor, generating 3' termini of tRNAs. A 3'-hydroxy group is left at the tRNA terminus and a 5'-phosphoryl group is left at the trailer molecule.. Zinc phosphodiesterase, which displays some tRNA 3'-processing endonuclease activity. Probably involved in tRNA maturation, by removing a 3'-trailer from precursor tRNA. This Halorubrum lacusprofundi (strain ATCC 49239 / DSM 5036 / JCM 8891 / ACAM 34) protein is Ribonuclease Z.